The chain runs to 266 residues: Phosphate import ATP-binding protein PstB (266 aa).

An ABC transporter domain is found at 15–261 (VQKSVVNKLN…PKNKQTEDYI (247 aa)). An ATP-binding site is contributed by 50–57 (GPSGCGKS).

The protein belongs to the ABC transporter superfamily. Phosphate importer (TC 3.A.1.7) family. In terms of assembly, the complex is composed of two ATP-binding proteins (PstB), two transmembrane proteins (PstC and PstA) and a solute-binding protein (PstS).

Its subcellular location is the cell inner membrane. It carries out the reaction phosphate(out) + ATP + H2O = ADP + 2 phosphate(in) + H(+). Its function is as follows. Part of the ABC transporter complex PstSACB involved in phosphate import. Responsible for energy coupling to the transport system. In Nitrosomonas europaea (strain ATCC 19718 / CIP 103999 / KCTC 2705 / NBRC 14298), this protein is Phosphate import ATP-binding protein PstB.